We begin with the raw amino-acid sequence, 484 residues long: Bifunctional protein GlmU (484 aa).

The interval Met-1–Arg-240 is pyrophosphorylase. UDP-N-acetyl-alpha-D-glucosamine contacts are provided by residues Leu-12–Gly-15, Lys-26, Gln-79, and Gly-84–Thr-85. Asp-113 contacts Mg(2+). UDP-N-acetyl-alpha-D-glucosamine is bound by residues Gly-150, Glu-165, Asn-180, and Asn-238. Asn-238 contributes to the Mg(2+) binding site. The segment at Val-241 to Asp-261 is linker. An N-acetyltransferase region spans residues Gly-262–Arg-484. Residues Arg-343 and Lys-361 each contribute to the UDP-N-acetyl-alpha-D-glucosamine site. Catalysis depends on His-373, which acts as the Proton acceptor. Positions 376 and 387 each coordinate UDP-N-acetyl-alpha-D-glucosamine. Acetyl-CoA-binding positions include Ala-390, Asn-396–Tyr-397, Ser-415, and Ala-433. The segment at Glu-457 to Arg-484 is disordered. The span at Glu-474 to Arg-484 shows a compositional bias: basic and acidic residues.

In the N-terminal section; belongs to the N-acetylglucosamine-1-phosphate uridyltransferase family. This sequence in the C-terminal section; belongs to the transferase hexapeptide repeat family. As to quaternary structure, homotrimer. It depends on Mg(2+) as a cofactor.

It is found in the cytoplasm. It carries out the reaction alpha-D-glucosamine 1-phosphate + acetyl-CoA = N-acetyl-alpha-D-glucosamine 1-phosphate + CoA + H(+). The enzyme catalyses N-acetyl-alpha-D-glucosamine 1-phosphate + UTP + H(+) = UDP-N-acetyl-alpha-D-glucosamine + diphosphate. It functions in the pathway nucleotide-sugar biosynthesis; UDP-N-acetyl-alpha-D-glucosamine biosynthesis; N-acetyl-alpha-D-glucosamine 1-phosphate from alpha-D-glucosamine 6-phosphate (route II): step 2/2. Its pathway is nucleotide-sugar biosynthesis; UDP-N-acetyl-alpha-D-glucosamine biosynthesis; UDP-N-acetyl-alpha-D-glucosamine from N-acetyl-alpha-D-glucosamine 1-phosphate: step 1/1. It participates in bacterial outer membrane biogenesis; LPS lipid A biosynthesis. Catalyzes the last two sequential reactions in the de novo biosynthetic pathway for UDP-N-acetylglucosamine (UDP-GlcNAc). The C-terminal domain catalyzes the transfer of acetyl group from acetyl coenzyme A to glucosamine-1-phosphate (GlcN-1-P) to produce N-acetylglucosamine-1-phosphate (GlcNAc-1-P), which is converted into UDP-GlcNAc by the transfer of uridine 5-monophosphate (from uridine 5-triphosphate), a reaction catalyzed by the N-terminal domain. In Thermobifida fusca (strain YX), this protein is Bifunctional protein GlmU.